Here is a 299-residue protein sequence, read N- to C-terminus: Pyridoxal 5'-phosphate synthase subunit PdxS (299 aa).

Asp-24 contacts D-ribose 5-phosphate. The Schiff-base intermediate with D-ribose 5-phosphate role is filled by Lys-81. Gly-153 serves as a coordination point for D-ribose 5-phosphate. Arg-165 provides a ligand contact to D-glyceraldehyde 3-phosphate. Residues Gly-219 and 240 to 241 (GS) contribute to the D-ribose 5-phosphate site.

Belongs to the PdxS/SNZ family. As to quaternary structure, in the presence of PdxT, forms a dodecamer of heterodimers.

The enzyme catalyses aldehydo-D-ribose 5-phosphate + D-glyceraldehyde 3-phosphate + L-glutamine = pyridoxal 5'-phosphate + L-glutamate + phosphate + 3 H2O + H(+). The protein operates within cofactor biosynthesis; pyridoxal 5'-phosphate biosynthesis. Its function is as follows. Catalyzes the formation of pyridoxal 5'-phosphate from ribose 5-phosphate (RBP), glyceraldehyde 3-phosphate (G3P) and ammonia. The ammonia is provided by the PdxT subunit. Can also use ribulose 5-phosphate and dihydroxyacetone phosphate as substrates, resulting from enzyme-catalyzed isomerization of RBP and G3P, respectively. In Methanococcus vannielii (strain ATCC 35089 / DSM 1224 / JCM 13029 / OCM 148 / SB), this protein is Pyridoxal 5'-phosphate synthase subunit PdxS.